Here is a 591-residue protein sequence, read N- to C-terminus: Aspartate--tRNA ligase (591 aa).

Glutamate 176 provides a ligand contact to L-aspartate. The tract at residues glutamine 200–lysine 203 is aspartate. Arginine 222 provides a ligand contact to L-aspartate. ATP is bound by residues arginine 222–glutamate 224 and glutamine 231. Histidine 450 provides a ligand contact to L-aspartate. Glutamate 484 is an ATP binding site. Arginine 491 is an L-aspartate binding site. Residue glycine 536 to arginine 539 coordinates ATP.

The protein belongs to the class-II aminoacyl-tRNA synthetase family. Type 1 subfamily. As to quaternary structure, homodimer.

Its subcellular location is the cytoplasm. It catalyses the reaction tRNA(Asp) + L-aspartate + ATP = L-aspartyl-tRNA(Asp) + AMP + diphosphate. Functionally, catalyzes the attachment of L-aspartate to tRNA(Asp) in a two-step reaction: L-aspartate is first activated by ATP to form Asp-AMP and then transferred to the acceptor end of tRNA(Asp). The protein is Aspartate--tRNA ligase of Listeria welshimeri serovar 6b (strain ATCC 35897 / DSM 20650 / CCUG 15529 / CIP 8149 / NCTC 11857 / SLCC 5334 / V8).